The chain runs to 363 residues: Glutamate 5-kinase (363 aa).

ATP is bound at residue Lys-6. The substrate site is built by Ser-46, Asp-133, and Asn-145. ATP contacts are provided by residues 165–166 and 207–213; these read TD and TGGMHTK. The PUA domain maps to 271-349; that stretch reads TGRLLLDEGA…RDIEAVLGFT (79 aa).

It belongs to the glutamate 5-kinase family.

It is found in the cytoplasm. It catalyses the reaction L-glutamate + ATP = L-glutamyl 5-phosphate + ADP. It participates in amino-acid biosynthesis; L-proline biosynthesis; L-glutamate 5-semialdehyde from L-glutamate: step 1/2. Catalyzes the transfer of a phosphate group to glutamate to form L-glutamate 5-phosphate. The sequence is that of Glutamate 5-kinase from Deinococcus geothermalis (strain DSM 11300 / CIP 105573 / AG-3a).